The primary structure comprises 216 residues: Protein fmp32, mitochondrial (216 aa).

Positions 111–133 (RQEMVALHSQVEQLFSDVERLKT) form a coiled coil. Residues 193–215 (TLQWVFGIVTGSGALLLAYVRLI) form a helical membrane-spanning segment.

This sequence belongs to the CCDC90 family.

It localises to the mitochondrion. The protein resides in the membrane. The protein is Protein fmp32, mitochondrial (fmp32) of Schizosaccharomyces pombe (strain 972 / ATCC 24843) (Fission yeast).